Reading from the N-terminus, the 86-residue chain is Cytochrome c oxidase subunit 3 (86 aa).

Topologically, residues 1-15 are mitochondrial matrix; sequence MAHQAHSYHMVDPSP. The chain crosses the membrane as a helical span at residues 16–34; the sequence is WPIFGAAAALLTTSGLVMW. Topologically, residues 35-40 are mitochondrial intermembrane; the sequence is FHYNSS. Residues 41-66 traverse the membrane as a helical segment; that stretch reads ILLAAGLLSMLLVMLQWWREIVREST. Over 67–86 the chain is Mitochondrial matrix; it reads FQGHHTPTVQKGLRYGMILF.

This sequence belongs to the cytochrome c oxidase subunit 3 family. Component of the cytochrome c oxidase (complex IV, CIV), a multisubunit enzyme composed of 14 subunits. The complex is composed of a catalytic core of 3 subunits MT-CO1, MT-CO2 and MT-CO3, encoded in the mitochondrial DNA, and 11 supernumerary subunits COX4I, COX5A, COX5B, COX6A, COX6B, COX6C, COX7A, COX7B, COX7C, COX8 and NDUFA4, which are encoded in the nuclear genome. The complex exists as a monomer or a dimer and forms supercomplexes (SCs) in the inner mitochondrial membrane with NADH-ubiquinone oxidoreductase (complex I, CI) and ubiquinol-cytochrome c oxidoreductase (cytochrome b-c1 complex, complex III, CIII), resulting in different assemblies (supercomplex SCI(1)III(2)IV(1) and megacomplex MCI(2)III(2)IV(2)).

It localises to the mitochondrion inner membrane. It carries out the reaction 4 Fe(II)-[cytochrome c] + O2 + 8 H(+)(in) = 4 Fe(III)-[cytochrome c] + 2 H2O + 4 H(+)(out). Component of the cytochrome c oxidase, the last enzyme in the mitochondrial electron transport chain which drives oxidative phosphorylation. The respiratory chain contains 3 multisubunit complexes succinate dehydrogenase (complex II, CII), ubiquinol-cytochrome c oxidoreductase (cytochrome b-c1 complex, complex III, CIII) and cytochrome c oxidase (complex IV, CIV), that cooperate to transfer electrons derived from NADH and succinate to molecular oxygen, creating an electrochemical gradient over the inner membrane that drives transmembrane transport and the ATP synthase. Cytochrome c oxidase is the component of the respiratory chain that catalyzes the reduction of oxygen to water. Electrons originating from reduced cytochrome c in the intermembrane space (IMS) are transferred via the dinuclear copper A center (CU(A)) of subunit 2 and heme A of subunit 1 to the active site in subunit 1, a binuclear center (BNC) formed by heme A3 and copper B (CU(B)). The BNC reduces molecular oxygen to 2 water molecules using 4 electrons from cytochrome c in the IMS and 4 protons from the mitochondrial matrix. This is Cytochrome c oxidase subunit 3 (MT-CO3) from Anas platyrhynchos (Mallard).